The sequence spans 193 residues: Putative nitroreductase HBN1 (193 aa).

Serine 2 bears the N-acetylserine mark.

It belongs to the nitroreductase family. Requires FMN as cofactor.

Its subcellular location is the cytoplasm. It is found in the nucleus. This Saccharomyces cerevisiae (strain ATCC 204508 / S288c) (Baker's yeast) protein is Putative nitroreductase HBN1 (HBN1).